A 195-amino-acid polypeptide reads, in one-letter code: Recombination protein RecR (195 aa).

Residues 53-68 (CSVCFNIDVKSPCSIC) form a C4-type zinc finger. The 96-residue stretch at 76–171 (QLLCIVEELG…KITRLACGIP (96 aa)) folds into the Toprim domain.

The protein belongs to the RecR family.

Its function is as follows. May play a role in DNA repair. It seems to be involved in an RecBC-independent recombinational process of DNA repair. It may act with RecF and RecO. The polypeptide is Recombination protein RecR (Ehrlichia canis (strain Jake)).